Consider the following 558-residue polypeptide: 2-isopropylmalate synthase (558 aa).

One can recognise a Pyruvate carboxyltransferase domain in the interval proline 30–glutamate 303. Residues aspartate 39, histidine 242, histidine 244, and asparagine 278 each contribute to the Mg(2+) site. The tract at residues glutamine 437–lysine 558 is regulatory domain.

This sequence belongs to the alpha-IPM synthase/homocitrate synthase family. LeuA type 2 subfamily. As to quaternary structure, homodimer. Mg(2+) is required as a cofactor.

The protein localises to the cytoplasm. The enzyme catalyses 3-methyl-2-oxobutanoate + acetyl-CoA + H2O = (2S)-2-isopropylmalate + CoA + H(+). It functions in the pathway amino-acid biosynthesis; L-leucine biosynthesis; L-leucine from 3-methyl-2-oxobutanoate: step 1/4. Catalyzes the condensation of the acetyl group of acetyl-CoA with 3-methyl-2-oxobutanoate (2-ketoisovalerate) to form 3-carboxy-3-hydroxy-4-methylpentanoate (2-isopropylmalate). This chain is 2-isopropylmalate synthase, found in Rhizobium meliloti (strain 1021) (Ensifer meliloti).